The chain runs to 411 residues: MSKVNMRALLESFSTVILSIYPLAKSTNQQSHSHSLSLTQFLYETIRRSRVDYTTLLLALYYFIRFRDAASSKPTNYIPLLCGRRLFLVCLMAATKFLQDRSFSNRAWSRLSGLPVDKLLVLEYMFYQCIDYRLVVPKHIFARWSLLVGECCAHATARYDSTDPNVASFGSVAQYWVSLFSNVQSSLDDLFSIACLTKIAHRRMNANAALKNQATRKPSSSPQTTQDSSPILTMAPSTPVSVGSTPPSTPSVLPIAKQLAPMNVCKAHIQASNQSRTLTTASPPEQIPLMEPQVYVNPQVLPGRLSSLSKPVSLPPTPSSPKVGVYRPMTSKSNGGVAYCYNAQKLNNATGPVTFNMPFASVLPLAVSVSCDLGTASAYVASLPQPCSQKRHLEEDYSCLTEHSAKRRSYF.

Disordered stretches follow at residues 210–253 and 307–326; these read LKNQ…PSVL and SLSKPVSLPPTPSSPKVGVY. Residues 218–252 show a composition bias toward low complexity; the sequence is PSSSPQTTQDSSPILTMAPSTPVSVGSTPPSTPSV.

The protein belongs to the cyclin family.

Its function is as follows. Essential for the control of the cell cycle at the G1/S (start) transition. Interacts with the pef1 protein kinase. The pef1/pas1 complex activates the res2/cdc10 complex. The protein is G1/S-specific cyclin pas1 (pas1) of Schizosaccharomyces pombe (strain 972 / ATCC 24843) (Fission yeast).